Reading from the N-terminus, the 103-residue chain is Large ribosomal subunit protein bL21 (103 aa).

It belongs to the bacterial ribosomal protein bL21 family. As to quaternary structure, part of the 50S ribosomal subunit. Contacts protein L20.

This protein binds to 23S rRNA in the presence of protein L20. In Azoarcus sp. (strain BH72), this protein is Large ribosomal subunit protein bL21.